We begin with the raw amino-acid sequence, 278 residues long: Potassium/proton antiporter CemA (278 aa).

A run of 4 helical transmembrane segments spans residues 61 to 81 (IFLL…FDFG), 155 to 175 (AVKN…LMIT), 203 to 223 (IILF…EVII), and 238 to 258 (FIFL…KYWI).

It belongs to the CemA family.

The protein resides in the plastid. It is found in the chloroplast inner membrane. It catalyses the reaction K(+)(in) + H(+)(out) = K(+)(out) + H(+)(in). In terms of biological role, contributes to K(+)/H(+) antiport activity by supporting proton efflux to control proton extrusion and homeostasis in chloroplasts in a light-dependent manner to modulate photosynthesis. Prevents excessive induction of non-photochemical quenching (NPQ) under continuous-light conditions. Indirectly promotes efficient inorganic carbon uptake into chloroplasts. The chain is Potassium/proton antiporter CemA from Porphyra purpurea (Red seaweed).